A 463-amino-acid polypeptide reads, in one-letter code: Abscisic acid 8'-hydroxylase 3 (463 aa).

Residues 6-26 (LFLTLSAAALFLCLLRFIAGV) traverse the membrane as a helical segment. Cysteine 411 lines the heme pocket.

The protein belongs to the cytochrome P450 family. Heme serves as cofactor. Mainly expressed in flower buds, flowers, rosette leaves and roots. Lower expression in mature siliques and inflorescence stems. Not expressed in dry seeds.

Its subcellular location is the membrane. It catalyses the reaction 2-cis-(+)-abscisate + reduced [NADPH--hemoprotein reductase] + O2 = (+)-8'-hydroxyabscisate + oxidized [NADPH--hemoprotein reductase] + H2O + H(+). The protein operates within plant hormone degradation; abscisic acid degradation. With respect to regulation, inhibited by tetcyclcis, but not by metyrapone. Functionally, involved in the oxidative degradation of abscisic acid, but not in the isomerization of the produced 8'-hydroxyabscisic acid (8'-OH-ABA) to (-)-phaseic acid (PA). Involved in the control of postgermination growth. The chain is Abscisic acid 8'-hydroxylase 3 (CYP707A3) from Arabidopsis thaliana (Mouse-ear cress).